The primary structure comprises 534 residues: Potential RNA-dependent RNA polymerase (534 aa).

The RdRp catalytic domain occupies 255–373 (DVVVCTDFSK…TYPGISAEDV (119 aa)).

It is found in the virion. The catalysed reaction is RNA(n) + a ribonucleoside 5'-triphosphate = RNA(n+1) + diphosphate. Its function is as follows. RNA-directed RNA polymerase that is involved in both transcription and genome replication. The protein is Potential RNA-dependent RNA polymerase (Segment-2) of Human picobirnavirus (strain Human/Thailand/Hy005102/-) (PBV).